We begin with the raw amino-acid sequence, 459 residues long: Argininosuccinate lyase (459 aa).

It belongs to the lyase 1 family. Argininosuccinate lyase subfamily.

It localises to the cytoplasm. The catalysed reaction is 2-(N(omega)-L-arginino)succinate = fumarate + L-arginine. It participates in amino-acid biosynthesis; L-arginine biosynthesis; L-arginine from L-ornithine and carbamoyl phosphate: step 3/3. The chain is Argininosuccinate lyase from Prochlorococcus marinus (strain MIT 9301).